Consider the following 226-residue polypeptide: N-acetyltransferase family 8 member 3 (226 aa).

2 consecutive transmembrane segments (helical) span residues 36–56 and 58–78; these read MLLLPRTLLLLLGVPLTLFLA and GSWLLVLLSILTLFLSLWFLA. The N-acetyltransferase domain maps to 61 to 220; it reads LLVLLSILTL…PMINLKYSLT (160 aa).

This sequence belongs to the camello family.

The protein localises to the nucleus membrane. The protein resides in the cytoplasm. Its subcellular location is the perinuclear region. It catalyses the reaction L-lysyl-[protein] + acetyl-CoA = N(6)-acetyl-L-lysyl-[protein] + CoA + H(+). Functionally, has histone acetyltransferase activity in vitro, with specificity for histone H4. The sequence is that of N-acetyltransferase family 8 member 3 from Mus musculus (Mouse).